The chain runs to 155 residues: Snaclec agkicetin-C subunit alpha (155 aa).

An N-terminal signal peptide occupies residues methionine 1–alanine 23. 3 cysteine pairs are disulfide-bonded: cysteine 25–cysteine 36, cysteine 53–cysteine 149, and cysteine 124–cysteine 141. Residues tyrosine 32–lysine 150 form the C-type lectin domain.

It belongs to the snaclec family. As to quaternary structure, heterodimer of subunits alpha and beta; disulfide-linked. Expressed by the venom gland.

The protein resides in the secreted. Is a potent glycoprotein Ibalpha (GP1BA) antagonist. Concentration-dependently inhibits botrocetin-, ristocetin- and low dose thrombin-induced platelet aggregation. Inhibits platelet adhesion only through inhibiting the vWF interaction with GP1BA, but has minimal effect on other platelet receptors, such as alpha-IIb/beta-3 (ITGA2B/ITGB3) or alpha-2/beta-1 (ITGA2/ITGB1). Causes an instant severe thrombocytopenia in rats and is not lethal to mice. This Deinagkistrodon acutus (Hundred-pace snake) protein is Snaclec agkicetin-C subunit alpha.